The chain runs to 216 residues: Ribosomal RNA small subunit methyltransferase G (216 aa).

Residues Gly-73, Leu-78, 124 to 125 (AE), and Arg-139 contribute to the S-adenosyl-L-methionine site.

It belongs to the methyltransferase superfamily. RNA methyltransferase RsmG family.

It is found in the cytoplasm. Functionally, specifically methylates the N7 position of guanine in position 518 of 16S rRNA. The polypeptide is Ribosomal RNA small subunit methyltransferase G (Paenarthrobacter aurescens (strain TC1)).